Consider the following 370-residue polypeptide: Protein-glutamate methylesterase/protein-glutamine glutaminase 3 (370 aa).

The Response regulatory domain occupies 3–119; it reads KVLIVDDSAL…SLNVSRIERE (117 aa). 4-aspartylphosphate is present on Asp-53. The CheB-type methylesterase domain occupies 166-360; sequence SLTEIGVVLI…GQLNAWMSRT (195 aa). Catalysis depends on residues Ser-178, His-205, and Asp-302.

The protein belongs to the CheB family. In terms of processing, phosphorylated by CheA. Phosphorylation of the N-terminal regulatory domain activates the methylesterase activity.

The protein resides in the cytoplasm. It carries out the reaction [protein]-L-glutamate 5-O-methyl ester + H2O = L-glutamyl-[protein] + methanol + H(+). The catalysed reaction is L-glutaminyl-[protein] + H2O = L-glutamyl-[protein] + NH4(+). Functionally, involved in chemotaxis. Part of a chemotaxis signal transduction system that modulates chemotaxis in response to various stimuli. Catalyzes the demethylation of specific methylglutamate residues introduced into the chemoreceptors (methyl-accepting chemotaxis proteins or MCP) by CheR. Also mediates the irreversible deamidation of specific glutamine residues to glutamic acid. This Rhodospirillum rubrum (strain ATCC 11170 / ATH 1.1.1 / DSM 467 / LMG 4362 / NCIMB 8255 / S1) protein is Protein-glutamate methylesterase/protein-glutamine glutaminase 3.